Here is a 332-residue protein sequence, read N- to C-terminus: MKVTFEQLKAAFNRVLISRGVDSETADACAEMFARTTESGVYSHGVNRFPRFIQQLENGDIIPDAQPKRITSLGAIEQWDAQRSIGNLTAKKMMDRAIELAADHGIGLVALRNANHWMRGGSYGWQAAEKGYIGICWTNSIAVMPPWGAKECRIGTNPLIVAIPSTPITMVDMSMSMFSYGMLEVNRLAGRQLPVDGGFDDEGNLTKEPGVIEKNRRILPMGYWKGSGMSLVLDMIATLLSDGASVAEVTEDNSDEYGISQIFIAIEVDKLIDGPTRDAKLQRIMDYVTSAERADENQAIRLPGHEFTTLLAENRRNGITVDDSVWAKIQAL.

Residue H44 is the Proton donor of the active site. NAD(+) is bound by residues 168 to 174, 224 to 225, and 304 to 306; these read ITMVDMS, WK, and GHE.

The protein belongs to the LDH2/MDH2 oxidoreductase family. DlgD subfamily. In terms of assembly, homodimer.

It localises to the cytoplasm. The enzyme catalyses 3-dehydro-L-gulonate + NAD(+) = 2,3-dioxo-L-gulonate + NADH + H(+). The catalysed reaction is 3-dehydro-L-gulonate + NADP(+) = 2,3-dioxo-L-gulonate + NADPH + H(+). Catalyzes the reduction of 2,3-diketo-L-gulonate in the presence of NADH, to form 3-keto-L-gulonate. The chain is 2,3-diketo-L-gulonate reductase from Escherichia coli O6:K15:H31 (strain 536 / UPEC).